A 94-amino-acid chain; its full sequence is Co-chaperonin GroES (94 aa).

Belongs to the GroES chaperonin family. Heptamer of 7 subunits arranged in a ring. Interacts with the chaperonin GroEL.

The protein resides in the cytoplasm. In terms of biological role, together with the chaperonin GroEL, plays an essential role in assisting protein folding. The GroEL-GroES system forms a nano-cage that allows encapsulation of the non-native substrate proteins and provides a physical environment optimized to promote and accelerate protein folding. GroES binds to the apical surface of the GroEL ring, thereby capping the opening of the GroEL channel. The sequence is that of Co-chaperonin GroES from Lactococcus lactis subsp. lactis (strain IL1403) (Streptococcus lactis).